We begin with the raw amino-acid sequence, 413 residues long: Aminopeptidase 2 (413 aa).

A divalent metal cation contacts are provided by Glu-250, Glu-316, Glu-340, His-345, His-378, and Asp-380.

The protein belongs to the peptidase M29 family. As to quaternary structure, homodimer. Requires Co(2+) as cofactor. The cofactor is Zn(2+). It depends on Mg(2+) as a cofactor.

Broad specificity metal-dependent exopeptidase, releasing all N-terminal amino acids. The polypeptide is Aminopeptidase 2 (Geobacillus stearothermophilus (Bacillus stearothermophilus)).